The chain runs to 96 residues: MSLSEAQVRHVARLARIALSDEEVNVMRAQLSAILDYIAMLQEVDVSNVPPTAQVTGLTTVWRPDVVGEMLTQEQALANAPDQQDGMFRVRAVFEE.

This sequence belongs to the GatC family. Heterotrimer of A, B and C subunits.

It catalyses the reaction L-glutamyl-tRNA(Gln) + L-glutamine + ATP + H2O = L-glutaminyl-tRNA(Gln) + L-glutamate + ADP + phosphate + H(+). The catalysed reaction is L-aspartyl-tRNA(Asn) + L-glutamine + ATP + H2O = L-asparaginyl-tRNA(Asn) + L-glutamate + ADP + phosphate + 2 H(+). Allows the formation of correctly charged Asn-tRNA(Asn) or Gln-tRNA(Gln) through the transamidation of misacylated Asp-tRNA(Asn) or Glu-tRNA(Gln) in organisms which lack either or both of asparaginyl-tRNA or glutaminyl-tRNA synthetases. The reaction takes place in the presence of glutamine and ATP through an activated phospho-Asp-tRNA(Asn) or phospho-Glu-tRNA(Gln). In Chloroflexus aggregans (strain MD-66 / DSM 9485), this protein is Aspartyl/glutamyl-tRNA(Asn/Gln) amidotransferase subunit C.